A 234-amino-acid polypeptide reads, in one-letter code: Phosphoribosylaminoimidazole-succinocarboxamide synthase (234 aa).

The protein belongs to the SAICAR synthetase family.

It carries out the reaction 5-amino-1-(5-phospho-D-ribosyl)imidazole-4-carboxylate + L-aspartate + ATP = (2S)-2-[5-amino-1-(5-phospho-beta-D-ribosyl)imidazole-4-carboxamido]succinate + ADP + phosphate + 2 H(+). The protein operates within purine metabolism; IMP biosynthesis via de novo pathway; 5-amino-1-(5-phospho-D-ribosyl)imidazole-4-carboxamide from 5-amino-1-(5-phospho-D-ribosyl)imidazole-4-carboxylate: step 1/2. The protein is Phosphoribosylaminoimidazole-succinocarboxamide synthase of Exiguobacterium sp. (strain ATCC BAA-1283 / AT1b).